Here is a 508-residue protein sequence, read N- to C-terminus: Photosystem II CP47 reaction center protein (508 aa).

6 helical membrane passes run 21–36 (SVHI…WAGS), 101–115 (IVFS…IWHW), 140–156 (GIHL…FGAF), 203–218 (IAAG…FHLS), 237–252 (VLSS…AFVV), and 457–472 (SFAL…HGAR).

This sequence belongs to the PsbB/PsbC family. PsbB subfamily. PSII is composed of 1 copy each of membrane proteins PsbA, PsbB, PsbC, PsbD, PsbE, PsbF, PsbH, PsbI, PsbJ, PsbK, PsbL, PsbM, PsbT, PsbX, PsbY, PsbZ, Psb30/Ycf12, at least 3 peripheral proteins of the oxygen-evolving complex and a large number of cofactors. It forms dimeric complexes. Binds multiple chlorophylls. PSII binds additional chlorophylls, carotenoids and specific lipids. is required as a cofactor.

It is found in the plastid. It localises to the chloroplast thylakoid membrane. Its function is as follows. One of the components of the core complex of photosystem II (PSII). It binds chlorophyll and helps catalyze the primary light-induced photochemical processes of PSII. PSII is a light-driven water:plastoquinone oxidoreductase, using light energy to abstract electrons from H(2)O, generating O(2) and a proton gradient subsequently used for ATP formation. This is Photosystem II CP47 reaction center protein from Atropa belladonna (Belladonna).